Reading from the N-terminus, the 1353-residue chain is Tenascin-R (1353 aa).

A signal peptide spans 1-33 (MGTDSENPVLRNVLISFNLLLLGAVLKPFECRL). The stretch at 132 to 156 (SLQELLSRIEMLEREVSMLRDQCNS) forms a coiled coil. N179 and N197 each carry an N-linked (GlcNAc...) asparagine glycan. EGF-like domains lie at 187–198 (CICSEGWAGSNC), 234–260 (CPAG…GEDC), 265–291 (CPRD…GEDC), and 292–323 (GWLR…QDCS). An N-linked (GlcNAc...) asparagine glycan is attached at N277. 2 disulfide bridges follow: C296/C306 and C313/C322. Fibronectin type-III domains lie at 327–419 (PPEN…TPQG), 420–504 (LKFK…TLID), 505–594 (GPTQ…TEID), 595–686 (APKN…TELD), 687–776 (SPRD…VRPI), 777–863 (TQLH…TGMD), 864–952 (APKD…AMDA), 953–1037 (PLGV…TLLD), and 1038–1126 (PPTN…GGRV). N-linked (GlcNAc...) asparagine glycans are attached at residues N391, N469, and N580. 7 N-linked (GlcNAc...) asparagine glycosylation sites follow: N734, N790, N872, N1031, N1041, N1256, and N1342. Residues 1124–1339 (GRVFANPQDC…FVEMKMRPYN (216 aa)) enclose the Fibrinogen C-terminal domain.

The protein belongs to the tenascin family. In terms of assembly, forms homodimers and homotrimers. Interacts with CNTN1, NFASC and CSPG5. Brain specific.

Its subcellular location is the secreted. The protein resides in the extracellular space. It localises to the extracellular matrix. In terms of biological role, neural extracellular matrix (ECM) protein involved in interactions with different cells and matrix components. Involved in cell attachment and neurite formation. Interaction with CNTN1 enhances the neurite outgrowth. This is Tenascin-R (TNR) from Gallus gallus (Chicken).